A 316-amino-acid polypeptide reads, in one-letter code: Pantothenate kinase (316 aa).

Residue 95–102 coordinates ATP; the sequence is GSVAVGKS.

This sequence belongs to the prokaryotic pantothenate kinase family.

The protein localises to the cytoplasm. The catalysed reaction is (R)-pantothenate + ATP = (R)-4'-phosphopantothenate + ADP + H(+). Its pathway is cofactor biosynthesis; coenzyme A biosynthesis; CoA from (R)-pantothenate: step 1/5. This chain is Pantothenate kinase, found in Escherichia coli O17:K52:H18 (strain UMN026 / ExPEC).